The following is a 660-amino-acid chain: DNA mismatch repair protein MutL (660 aa).

Belongs to the DNA mismatch repair MutL/HexB family.

Functionally, this protein is involved in the repair of mismatches in DNA. It is required for dam-dependent methyl-directed DNA mismatch repair. May act as a 'molecular matchmaker', a protein that promotes the formation of a stable complex between two or more DNA-binding proteins in an ATP-dependent manner without itself being part of a final effector complex. The sequence is that of DNA mismatch repair protein MutL from Streptococcus equi subsp. equi (strain 4047).